A 101-amino-acid chain; its full sequence is Ubiquitin-related modifier 1 (101 aa).

Gly-101 carries the 1-thioglycine modification. Residue Gly-101 forms a Glycyl lysine isopeptide (Gly-Lys) (interchain with K-? in acceptor proteins) linkage.

This sequence belongs to the URM1 family. As to quaternary structure, component of a complex at least composed of URM1, CTU2/NCS2 and CTU1/ATPBD3. C-terminal thiocarboxylation occurs in 2 steps, it is first acyl-adenylated (-COAMP) via the hesA/moeB/thiF part of MOCS3, then thiocarboxylated (-COSH) via the rhodanese domain of MOCS3.

The protein localises to the cytoplasm. It participates in tRNA modification; 5-methoxycarbonylmethyl-2-thiouridine-tRNA biosynthesis. Its function is as follows. Acts as a sulfur carrier required for 2-thiolation of mcm(5)S(2)U at tRNA wobble positions of cytosolic tRNA(Lys), tRNA(Glu) and tRNA(Gln). Serves as sulfur donor in tRNA 2-thiolation reaction by being thiocarboxylated (-COSH) at its C-terminus by MOCS3. The sulfur is then transferred to tRNA to form 2-thiolation of mcm(5)S(2)U. Also acts as a ubiquitin-like protein (UBL) that is covalently conjugated via an isopeptide bond to lysine residues of target proteins such as MOCS3, ATPBD3, CTU2, USP15 and CAS. The thiocarboxylated form serves as substrate for conjugation and oxidative stress specifically induces the formation of UBL-protein conjugates. The sequence is that of Ubiquitin-related modifier 1 from Homo sapiens (Human).